The primary structure comprises 510 residues: 2,3-bisphosphoglycerate-independent phosphoglycerate mutase (510 aa).

Asp12 provides a ligand contact to Mn(2+). Position 36 is a phosphotyrosine (Tyr36). Ser62 provides a ligand contact to Mn(2+). Ser62 (phosphoserine intermediate) is an active-site residue. Substrate is bound by residues His123, 153-154 (RD), Arg185, Arg191, 261-264 (RPDR), and Lys336. 5 residues coordinate Mn(2+): Asp403, His407, Asp444, His445, and His462.

It belongs to the BPG-independent phosphoglycerate mutase family. As to quaternary structure, monomer. Requires Mn(2+) as cofactor.

The catalysed reaction is (2R)-2-phosphoglycerate = (2R)-3-phosphoglycerate. It functions in the pathway carbohydrate degradation; glycolysis; pyruvate from D-glyceraldehyde 3-phosphate: step 3/5. In terms of biological role, essential for rapid growth and for sporulation. Catalyzes the interconversion of 2-phosphoglycerate and 3-phosphoglycerate. The polypeptide is 2,3-bisphosphoglycerate-independent phosphoglycerate mutase (Halalkalibacterium halodurans (strain ATCC BAA-125 / DSM 18197 / FERM 7344 / JCM 9153 / C-125) (Bacillus halodurans)).